A 279-amino-acid chain; its full sequence is MPCRREEEEEAGEEAEGEEEEEDSFLLLQQSVALGSSGEVDRLVAQIGETLQLDAAQHSPASPCGPPGAPLRAPGPLAAAVPADKARSPAVPLLLPPALAETVGPAPPGVLRCALGDRGRVRGRAAPYCVAELATGPSALSPLPPQADLDGPPGAGKQGIPQPLSGPCRRGWLRGAAASRRLQQRRGSQPETRTGDDDPHRLLQQLVLSGNLIKEAVRRLHSRRLQLRAKLPQRPLLGPLSAPVHEPPSPRSPRAACSDPGASGRAQLRTGDGVLVPGS.

Disordered regions lie at residues M1–S24 and A56–P76. Residues E7 to S24 show a composition bias toward acidic residues. Residue S88 is modified to Phosphoserine. 2 disordered regions span residues G136 to H200 and R228 to S279. The interval D198 to L220 is involved in GSK-3 binding. S249 and S252 each carry phosphoserine.

It belongs to the GSK-3-binding protein family. In terms of assembly, binds DVL1. Binds GSK-3 and prevent GSK-3-dependent phosphorylation. Phosphorylated.

It localises to the cytoplasm. In terms of biological role, positively regulates the Wnt signaling pathway by stabilizing beta-catenin through the association with GSK-3. May play a role in tumor progression and collaborate with PIM1 and MYC in lymphomagenesis. This Homo sapiens (Human) protein is Proto-oncogene FRAT1 (FRAT1).